A 429-amino-acid chain; its full sequence is Dihydroorotase (429 aa).

2 residues coordinate Zn(2+): His62 and His64. Substrate is bound by residues 64-66 (HFR) and Asn96. 3 residues coordinate Zn(2+): Asp154, His181, and His234. Position 280 (Asn280) interacts with substrate. Asp307 lines the Zn(2+) pocket. The active site involves Asp307. Residues His311 and 325–326 (FG) contribute to the substrate site.

Belongs to the metallo-dependent hydrolases superfamily. DHOase family. Class I DHOase subfamily. Zn(2+) is required as a cofactor.

It carries out the reaction (S)-dihydroorotate + H2O = N-carbamoyl-L-aspartate + H(+). It functions in the pathway pyrimidine metabolism; UMP biosynthesis via de novo pathway; (S)-dihydroorotate from bicarbonate: step 3/3. Its function is as follows. Catalyzes the reversible cyclization of carbamoyl aspartate to dihydroorotate. This is Dihydroorotase from Latilactobacillus sakei subsp. sakei (strain 23K) (Lactobacillus sakei subsp. sakei).